We begin with the raw amino-acid sequence, 448 residues long: Protein EVI2B (448 aa).

The N-terminal stretch at methionine 1–serine 21 is a signal peptide. N-linked (GlcNAc...) asparagine glycans are attached at residues asparagine 16 and asparagine 50. The Extracellular segment spans residues lysine 22–serine 202. The tract at residues alanine 74–glutamine 108 is disordered. A compositionally biased stretch (polar residues) spans serine 97 to glutamine 108. A glycan (N-linked (GlcNAc...) asparagine) is linked at asparagine 114. The helical transmembrane segment at isoleucine 203–lysine 226 threads the bilayer. At cysteine 227 to leucine 448 the chain is on the cytoplasmic side. Threonine 249 carries the post-translational modification Phosphothreonine. Serine 268, serine 271, serine 278, and serine 294 each carry phosphoserine. Disordered stretches follow at residues isoleucine 298–serine 372 and serine 427–leucine 448. 2 stretches are compositionally biased toward polar residues: residues valine 313 to serine 333 and glutamine 350 to serine 372.

In terms of tissue distribution, bone marrow, peripheral blood mononuclear cells, fibroblasts and Epstein-Barr virus-transformed lymphoblastoid cell lines. Strongly expressed in granulocytic cells, and weakly on lymphocytes cells.

Its subcellular location is the membrane. Functionally, required for granulocyte differentiation and functionality of hematopoietic progenitor cells through the control of cell cycle progression and survival of hematopoietic progenitor cells. This Homo sapiens (Human) protein is Protein EVI2B.